Here is a 639-residue protein sequence, read N- to C-terminus: MAU2 chromatid cohesion factor homolog (639 aa).

TPR repeat units lie at residues 453-486 and 493-526; these read GGFY…ANAE and SCSL…ASKI.

Belongs to the SCC4/mau-2 family. In terms of assembly, interacts with Nipped-B to form the cohesin loading complex.

It is found in the nucleus. The protein localises to the nucleoplasm. In terms of biological role, required for association of the cohesin complex with chromatin during interphase. Plays a role in sister chromatid cohesion and normal progression through prometaphase. This is MAU2 chromatid cohesion factor homolog from Drosophila ananassae (Fruit fly).